Here is an 863-residue protein sequence, read N- to C-terminus: Leucine--tRNA ligase (863 aa).

Positions proline 41–histidine 51 match the 'HIGH' region motif. The 'KMSKS' region motif lies at lysine 627–serine 631. Lysine 630 provides a ligand contact to ATP.

It belongs to the class-I aminoacyl-tRNA synthetase family.

The protein resides in the cytoplasm. The enzyme catalyses tRNA(Leu) + L-leucine + ATP = L-leucyl-tRNA(Leu) + AMP + diphosphate. This is Leucine--tRNA ligase from Jannaschia sp. (strain CCS1).